Reading from the N-terminus, the 571-residue chain is Proline--tRNA ligase (571 aa).

It belongs to the class-II aminoacyl-tRNA synthetase family. ProS type 1 subfamily. In terms of assembly, homodimer.

Its subcellular location is the cytoplasm. The enzyme catalyses tRNA(Pro) + L-proline + ATP = L-prolyl-tRNA(Pro) + AMP + diphosphate. Its function is as follows. Catalyzes the attachment of proline to tRNA(Pro) in a two-step reaction: proline is first activated by ATP to form Pro-AMP and then transferred to the acceptor end of tRNA(Pro). As ProRS can inadvertently accommodate and process non-cognate amino acids such as alanine and cysteine, to avoid such errors it has two additional distinct editing activities against alanine. One activity is designated as 'pretransfer' editing and involves the tRNA(Pro)-independent hydrolysis of activated Ala-AMP. The other activity is designated 'posttransfer' editing and involves deacylation of mischarged Ala-tRNA(Pro). The misacylated Cys-tRNA(Pro) is not edited by ProRS. The sequence is that of Proline--tRNA ligase from Histophilus somni (strain 2336) (Haemophilus somnus).